The chain runs to 345 residues: Anthranilate phosphoribosyltransferase (345 aa).

5-phospho-alpha-D-ribose 1-diphosphate-binding positions include glycine 80, 83 to 84, threonine 88, 90 to 93, 108 to 116, and serine 120; these read GD, NIST, and KHGNRSVSS. Residue glycine 80 coordinates anthranilate. Serine 92 contributes to the Mg(2+) binding site. Asparagine 111 provides a ligand contact to anthranilate. Arginine 166 is an anthranilate binding site. The Mg(2+) site is built by aspartate 225 and glutamate 226.

It belongs to the anthranilate phosphoribosyltransferase family. In terms of assembly, homodimer. Mg(2+) is required as a cofactor.

The enzyme catalyses N-(5-phospho-beta-D-ribosyl)anthranilate + diphosphate = 5-phospho-alpha-D-ribose 1-diphosphate + anthranilate. It functions in the pathway amino-acid biosynthesis; L-tryptophan biosynthesis; L-tryptophan from chorismate: step 2/5. Catalyzes the transfer of the phosphoribosyl group of 5-phosphorylribose-1-pyrophosphate (PRPP) to anthranilate to yield N-(5'-phosphoribosyl)-anthranilate (PRA). The polypeptide is Anthranilate phosphoribosyltransferase (Desulforamulus reducens (strain ATCC BAA-1160 / DSM 100696 / MI-1) (Desulfotomaculum reducens)).